Consider the following 228-residue polypeptide: UPF0758 protein NT01CX_1687 (228 aa).

The MPN domain maps to 106 to 228; the sequence is IIKSPGDVAG…YISLKEKNIL (123 aa). Residues His177, His179, and Asp190 each coordinate Zn(2+). A JAMM motif motif is present at residues 177–190; sequence HNHPSGDPTPSSED.

This sequence belongs to the UPF0758 family.

This is UPF0758 protein NT01CX_1687 from Clostridium novyi (strain NT).